We begin with the raw amino-acid sequence, 476 residues long: MNVGSILNDEPSPSKKTTNDDSGDSVRPDMSTYQRHSLVNLLNDPAPNNELKTKETKKDWSEDEHSNFRVPVTEPNQQLSPVLRRSSIADITNEKDVDISSSTEHPIEQDKSEKDEDELTRISKLKSTNKPRRYTEPPIWAQEWIPTSYQGTANGTPVVNAQESSLSSKRVFDRSSTVNVDLECSITGVIPPPSVTRTIAEWIYANFTEIPDDQRKYVELELKFGTIIDKRAGHRIDINVSTECIFTDNSNTYFDMGVHEVGWNDMCKFLDDLEKSYQDELRRSPQANSNSPKRKFNILESDITDNFYQITSRNEQPKSIRISKDNLLDPPRYTAINKQRLSSLFIHNPSSMYDLRLSLSYENPIADNNIDGIIKKNQPTLTRIKKRNSWTHRPTVTRFDMTRVLSPRESKNKSGKKIVEQDQSFEVELEVDTLELFNGFDKFKSGADSIRFEELVEIFVNNARCLNNRVTKLANK.

Residues 1-133 (MNVGSILNDE…KLKSTNKPRR (133 aa)) are disordered. Basic and acidic residues-rich tracts occupy residues 51–67 (LKTK…EHSN) and 105–114 (HPIEQDKSEK). Positions 123-132 (SKLKSTNKPR) are enriched in basic residues.

The protein belongs to the fungal TPase family. Heterodimer. The mRNA-capping enzyme is composed of two separate chains alpha and beta, respectively a mRNA guanylyltransferase and an mRNA 5'-triphosphate monophosphatase. Mg(2+) is required as a cofactor.

The protein resides in the nucleus. The enzyme catalyses a 5'-end triphospho-ribonucleoside in mRNA + H2O = a 5'-end diphospho-ribonucleoside in mRNA + phosphate + H(+). Its function is as follows. First step of mRNA capping. Converts the 5'-triphosphate end of a nascent mRNA chain into a diphosphate end. The chain is mRNA-capping enzyme subunit beta (CET1) from Debaryomyces hansenii (strain ATCC 36239 / CBS 767 / BCRC 21394 / JCM 1990 / NBRC 0083 / IGC 2968) (Yeast).